Here is an 86-residue protein sequence, read N- to C-terminus: Kappa-theraphotoxin-Cg1a 3 (86 aa).

A signal peptide spans 1–21 (MKVSVLITLAVLGVMFVWASA). The propeptide occupies 22 to 50 (AELEERGSDQRDSPAWLKSMERIFRSEER). 3 disulfides stabilise this stretch: Cys-52/Cys-66, Cys-59/Cys-71, and Cys-65/Cys-78. Residue Phe-84 is modified to Phenylalanine amide.

It belongs to the neurotoxin 10 (Hwtx-1) family. 28 (Jztx-11) subfamily. In terms of tissue distribution, expressed by the venom gland.

Its subcellular location is the secreted. Its function is as follows. This toxin acts as a voltage-dependent gating-modifier. It inhibits the sodium conductance (IC(50)=124 nM) and slows the fast inactivation (EC(50)=1180 nM) of Nav1.5/SCN5A. It significantly shifts the activation to more depolarized voltages and decreases the deactivation of Nav1.5 currents upon extreme depolarization, but only slightly affects voltage-dependence of steady-state inactivation. In addition, this toxin causes an approximately five-fold decrease in the rate of recovery from inactivation and an approximately 1.9-fold reduction in the closed-state inactivation rate. This toxin integrates the functions of site 3 toxins (alpha-scorpion toxins) with site 4 toxins (beta-scorpion and spider toxins) by targeting multiple sites on Nav1.5. Also shows inhibition of voltage-gated potassium channels (5 uM completely inhibits Kv2.1/KCNB1, whereas 5 uM moderately inhibits Kv4.2/KCND2 Kv4.1/KCND1 channels). The chain is Kappa-theraphotoxin-Cg1a 3 from Chilobrachys guangxiensis (Chinese earth tiger tarantula).